We begin with the raw amino-acid sequence, 467 residues long: Polygalacturonase (467 aa).

A signal peptide spans 1-27; sequence MALQRRFFQFVIITLLIPSFILGYTSA. Aspartate 283 serves as the catalytic Proton donor. An N-linked (GlcNAc...) asparagine glycan is attached at asparagine 290. Residue histidine 306 is part of the active site.

It belongs to the glycosyl hydrolase 28 family.

The protein resides in the secreted. The protein localises to the cell wall. It carries out the reaction (1,4-alpha-D-galacturonosyl)n+m + H2O = (1,4-alpha-D-galacturonosyl)n + (1,4-alpha-D-galacturonosyl)m.. Its function is as follows. Acts in concert with the pectinesterase, in the ripening process. Is involved in cell wall metabolism, specifically in polyuronide degradation. The chain is Polygalacturonase from Actinidia deliciosa (Kiwi).